A 298-amino-acid polypeptide reads, in one-letter code: Inosose dehydratase 1 (298 aa).

The protein belongs to the IolE/MocC family. Requires glutathione as cofactor. Co(2+) is required as a cofactor. Mn(2+) serves as cofactor.

It carries out the reaction scyllo-inosose = 3D-3,5/4-trihydroxycyclohexane-1,2-dione + H2O. It functions in the pathway polyol metabolism; myo-inositol degradation into acetyl-CoA; acetyl-CoA from myo-inositol: step 2/7. Catalyzes the dehydration of inosose (2-keto-myo-inositol, 2KMI or 2,4,6/3,5-pentahydroxycyclohexanone) to 3D-(3,5/4)-trihydroxycyclohexane-1,2-dione (D-2,3-diketo-4-deoxy-epi-inositol). The sequence is that of Inosose dehydratase 1 from Bacillus cereus (strain ZK / E33L).